The chain runs to 332 residues: Holliday junction branch migration complex subunit RuvB (332 aa).

The large ATPase domain (RuvB-L) stretch occupies residues 1–182 (MKLNKNSELK…FGLILKLNYY (182 aa)). ATP-binding positions include Leu21, Arg22, Gly63, Lys66, Thr67, Thr68, 129 to 131 (EDY), Arg172, Tyr182, and Arg219. Thr67 serves as a coordination point for Mg(2+). Residues 183–253 (SEDELELIIK…ISEIALEKLT (71 aa)) are small ATPAse domain (RuvB-S). A head domain (RuvB-H) region spans residues 256–332 (KNGLDDADYT…FKLFKNDKIK (77 aa)). Residues Arg311 and Arg316 each contribute to the DNA site.

Belongs to the RuvB family. Homohexamer. Forms an RuvA(8)-RuvB(12)-Holliday junction (HJ) complex. HJ DNA is sandwiched between 2 RuvA tetramers; dsDNA enters through RuvA and exits via RuvB. An RuvB hexamer assembles on each DNA strand where it exits the tetramer. Each RuvB hexamer is contacted by two RuvA subunits (via domain III) on 2 adjacent RuvB subunits; this complex drives branch migration. In the full resolvosome a probable DNA-RuvA(4)-RuvB(12)-RuvC(2) complex forms which resolves the HJ.

It localises to the cytoplasm. It carries out the reaction ATP + H2O = ADP + phosphate + H(+). Functionally, the RuvA-RuvB-RuvC complex processes Holliday junction (HJ) DNA during genetic recombination and DNA repair, while the RuvA-RuvB complex plays an important role in the rescue of blocked DNA replication forks via replication fork reversal (RFR). RuvA specifically binds to HJ cruciform DNA, conferring on it an open structure. The RuvB hexamer acts as an ATP-dependent pump, pulling dsDNA into and through the RuvAB complex. RuvB forms 2 homohexamers on either side of HJ DNA bound by 1 or 2 RuvA tetramers; 4 subunits per hexamer contact DNA at a time. Coordinated motions by a converter formed by DNA-disengaged RuvB subunits stimulates ATP hydrolysis and nucleotide exchange. Immobilization of the converter enables RuvB to convert the ATP-contained energy into a lever motion, pulling 2 nucleotides of DNA out of the RuvA tetramer per ATP hydrolyzed, thus driving DNA branch migration. The RuvB motors rotate together with the DNA substrate, which together with the progressing nucleotide cycle form the mechanistic basis for DNA recombination by continuous HJ branch migration. Branch migration allows RuvC to scan DNA until it finds its consensus sequence, where it cleaves and resolves cruciform DNA. The protein is Holliday junction branch migration complex subunit RuvB of Phytoplasma mali (strain AT).